Consider the following 967-residue polypeptide: Leucine--tRNA ligase (967 aa).

The 'HIGH' region motif lies at 43 to 53 (PYLSGHLHVGH). The 'KMSKS' region motif lies at 650-654 (KMSKS). Lys653 is a binding site for ATP.

Belongs to the class-I aminoacyl-tRNA synthetase family.

The protein localises to the cytoplasm. It carries out the reaction tRNA(Leu) + L-leucine + ATP = L-leucyl-tRNA(Leu) + AMP + diphosphate. The polypeptide is Leucine--tRNA ligase (Thermococcus kodakarensis (strain ATCC BAA-918 / JCM 12380 / KOD1) (Pyrococcus kodakaraensis (strain KOD1))).